We begin with the raw amino-acid sequence, 310 residues long: Vomeronasal type-1 receptor 44 (310 aa).

At 1–20 (MNKANLLHIDTNIKITLLAE) the chain is on the extracellular side. Residues 21–41 (VSVGISANSILFIAYLCMLLG) form a helical membrane-spanning segment. The Cytoplasmic segment spans residues 42–50 (ENRHKPIDL). A helical membrane pass occupies residues 51 to 71 (YIAFLSLTQLMLLITMGLIAV). Topologically, residues 72-93 (DMFMPWGRWDSTTCQSLIYLHR) are extracellular. Cys-85 and Cys-172 are oxidised to a cystine. A helical transmembrane segment spans residues 94–114 (FLRGLTLCATCLLNVLWTITL). Topologically, residues 115–131 (SSRNSCLAKFKHKYPHH) are cytoplasmic. The chain crosses the membrane as a helical span at residues 132-152 (ISGAFLFLCVLYMSFSSHFLV). Topologically, residues 153-190 (SMTVTPNLTSENFMYVTQSCSLLPMSYSRTSMFSTPVA) are extracellular. The N-linked (GlcNAc...) asparagine glycan is linked to Asn-159. Residues 191-211 (IRETFLISLMALSSGYMVALL) traverse the membrane as a helical segment. Residues 212-238 (WRHKKQAQHLRSTSLSSKASPEQRATR) are Cytoplasmic-facing. A helical transmembrane segment spans residues 239–259 (TILLLMSFFVVFYILDTVIFH). Residues 260 to 268 (SRMKFKDGS) are Extracellular-facing. A helical transmembrane segment spans residues 269-289 (ILYCFQIIVSHSYVTVSPFVF). Residues 290–310 (ICTEKHIIKFLRSMCGRIANI) are Cytoplasmic-facing.

Belongs to the G-protein coupled receptor 1 family.

It localises to the cell membrane. Its function is as follows. Putative pheromone receptor implicated in the regulation of social and reproductive behavior. The protein is Vomeronasal type-1 receptor 44 (Vmn1r44) of Mus musculus (Mouse).